The primary structure comprises 914 residues: Translation initiation factor IF-2 (914 aa).

Disordered stretches follow at residues 246–271 (EDGEAAKKKAAKPDGGEDVGVKKKKG) and 293–313 (SGMDDSGLSGSRQKFRKQRRM). A compositionally biased stretch (basic and acidic residues) spans 249 to 266 (EAAKKKAAKPDGGEDVGV). Positions 411–581 (TRPPVVTIMG…LAEAEIRELK (171 aa)) constitute a tr-type G domain. The segment at 420–427 (GHVDHGKT) is G1. A GTP-binding site is contributed by 420–427 (GHVDHGKT). A G2 region spans residues 445-449 (GITQH). Residues 467-470 (DTPG) form a G3 region. GTP contacts are provided by residues 467 to 471 (DTPGH) and 521 to 524 (NKID). The interval 521-524 (NKID) is G4. Residues 557–559 (SAK) are G5.

The protein belongs to the TRAFAC class translation factor GTPase superfamily. Classic translation factor GTPase family. IF-2 subfamily.

Its subcellular location is the cytoplasm. In terms of biological role, one of the essential components for the initiation of protein synthesis. Protects formylmethionyl-tRNA from spontaneous hydrolysis and promotes its binding to the 30S ribosomal subunits. Also involved in the hydrolysis of GTP during the formation of the 70S ribosomal complex. This is Translation initiation factor IF-2 from Chlorobaculum tepidum (strain ATCC 49652 / DSM 12025 / NBRC 103806 / TLS) (Chlorobium tepidum).